A 205-amino-acid chain; its full sequence is Phosphoribosyl-dephospho-CoA transferase (205 aa).

Residues Asp-134 and Asp-136 contribute to the active site.

This sequence belongs to the MdcG family.

The catalysed reaction is apo-[malonate decarboxylase ACP] + 2'-(5''-triphospho-alpha-D-ribosyl)-3'-dephospho-CoA = holo-[malonate decarboxylase ACP] + diphosphate. In terms of biological role, transfers 2'-(5-triphosphoribosyl)-3'-dephosphocoenzyme-A to the apo-[acyl-carrier-protein] of the malonate decarboxylase to yield holo-[acyl-carrier-protein]. This chain is Phosphoribosyl-dephospho-CoA transferase, found in Klebsiella pneumoniae (strain 342).